A 510-amino-acid chain; its full sequence is Bifunctional purine biosynthesis protein PurH (510 aa).

The MGS-like domain occupies Met1–Thr142.

Belongs to the PurH family.

It catalyses the reaction (6R)-10-formyltetrahydrofolate + 5-amino-1-(5-phospho-beta-D-ribosyl)imidazole-4-carboxamide = 5-formamido-1-(5-phospho-D-ribosyl)imidazole-4-carboxamide + (6S)-5,6,7,8-tetrahydrofolate. The enzyme catalyses IMP + H2O = 5-formamido-1-(5-phospho-D-ribosyl)imidazole-4-carboxamide. It functions in the pathway purine metabolism; IMP biosynthesis via de novo pathway; 5-formamido-1-(5-phospho-D-ribosyl)imidazole-4-carboxamide from 5-amino-1-(5-phospho-D-ribosyl)imidazole-4-carboxamide (10-formyl THF route): step 1/1. It participates in purine metabolism; IMP biosynthesis via de novo pathway; IMP from 5-formamido-1-(5-phospho-D-ribosyl)imidazole-4-carboxamide: step 1/1. In Campylobacter curvus (strain 525.92), this protein is Bifunctional purine biosynthesis protein PurH.